A 501-amino-acid polypeptide reads, in one-letter code: Cytochrome P450 2J4 (501 aa).

2 helical membrane-spanning segments follow: residues Ile-12–Ala-32 and Asn-77–Ile-97. Residue Cys-447 coordinates heme.

This sequence belongs to the cytochrome P450 family. The cofactor is heme. In terms of tissue distribution, expressed in small intestinal enterocytes (at protein level). In the intestinal crypt, expressed at higher levels in the mature villous cells than in undifferentiated crypt cells (at protein level). Expressed in liver, kidney, lung, and olfactory mucosa (at protein level).

The protein resides in the endoplasmic reticulum membrane. The protein localises to the microsome membrane. It catalyses the reaction an organic molecule + reduced [NADPH--hemoprotein reductase] + O2 = an alcohol + oxidized [NADPH--hemoprotein reductase] + H2O + H(+). The catalysed reaction is (5Z,8Z,11Z,14Z)-eicosatetraenoate + reduced [NADPH--hemoprotein reductase] + O2 = 19-hydroxy-(5Z,8Z,11Z,14Z)-eicosatetraenoate + oxidized [NADPH--hemoprotein reductase] + H2O + H(+). It carries out the reaction all-trans-retinal + reduced [NADPH--hemoprotein reductase] + O2 = all-trans-retinoate + oxidized [NADPH--hemoprotein reductase] + H2O + 2 H(+). The enzyme catalyses 9-cis-retinal + reduced [NADPH--hemoprotein reductase] + O2 = 9-cis-retinoate + oxidized [NADPH--hemoprotein reductase] + H2O + 2 H(+). It functions in the pathway lipid metabolism; arachidonate metabolism. The protein operates within cofactor metabolism; retinol metabolism. Its function is as follows. A cytochrome P450 monooxygenase that may play a major role in intestinal retinoid metabolism. Catalyzes the oxidative transformation of all-trans retinal and 9-cis-retinal to the corresponding active forms all-trans and 9-cis retinoic acids. Catalyzes the hydroxylation of carbon-hydrogen bonds. Hydroxylates arachidonic acid predominantly at the omega-1 position. Mechanistically, uses molecular oxygen inserting one oxygen atom into a substrate, and reducing the second into a water molecule, with two electrons provided by NADPH via cytochrome P450 reductase (CPR; NADPH--hemoprotein reductase). The sequence is that of Cytochrome P450 2J4 from Rattus norvegicus (Rat).